Reading from the N-terminus, the 288-residue chain is ATP synthase gamma chain (288 aa).

It belongs to the ATPase gamma chain family. In terms of assembly, F-type ATPases have 2 components, CF(1) - the catalytic core - and CF(0) - the membrane proton channel. CF(1) has five subunits: alpha(3), beta(3), gamma(1), delta(1), epsilon(1). CF(0) has three main subunits: a, b and c.

Its subcellular location is the cell inner membrane. Its function is as follows. Produces ATP from ADP in the presence of a proton gradient across the membrane. The gamma chain is believed to be important in regulating ATPase activity and the flow of protons through the CF(0) complex. In Legionella pneumophila (strain Paris), this protein is ATP synthase gamma chain.